Consider the following 117-residue polypeptide: Large ribosomal subunit protein bL19 (117 aa).

The protein belongs to the bacterial ribosomal protein bL19 family.

Its function is as follows. This protein is located at the 30S-50S ribosomal subunit interface and may play a role in the structure and function of the aminoacyl-tRNA binding site. The protein is Large ribosomal subunit protein bL19 of Mycoplasmopsis pulmonis (strain UAB CTIP) (Mycoplasma pulmonis).